We begin with the raw amino-acid sequence, 359 residues long: Protein RecA (359 aa).

An ATP-binding site is contributed by 74–81 (GPESSGKT).

It belongs to the RecA family.

It localises to the cytoplasm. Functionally, can catalyze the hydrolysis of ATP in the presence of single-stranded DNA, the ATP-dependent uptake of single-stranded DNA by duplex DNA, and the ATP-dependent hybridization of homologous single-stranded DNAs. It interacts with LexA causing its activation and leading to its autocatalytic cleavage. The chain is Protein RecA from Anaplasma marginale (strain St. Maries).